The sequence spans 475 residues: Glutamate--tRNA ligase 2 (475 aa).

The 'HIGH' region signature appears at 11 to 21 (PSPTGFLHIGG). Positions 116–133 (AEGRPPRYDGTWRDKDPA) are enriched in basic and acidic residues. A disordered region spans residues 116-137 (AEGRPPRYDGTWRDKDPAEAPS). The 'KMSKS' region motif lies at 240-244 (KLSKR). Lys243 lines the ATP pocket.

The protein belongs to the class-I aminoacyl-tRNA synthetase family. Glutamate--tRNA ligase type 1 subfamily. Monomer.

It localises to the cytoplasm. It catalyses the reaction tRNA(Glu) + L-glutamate + ATP = L-glutamyl-tRNA(Glu) + AMP + diphosphate. Functionally, catalyzes the attachment of glutamate to tRNA(Glu) in a two-step reaction: glutamate is first activated by ATP to form Glu-AMP and then transferred to the acceptor end of tRNA(Glu). This chain is Glutamate--tRNA ligase 2, found in Chelativorans sp. (strain BNC1).